The following is a 216-amino-acid chain: Gamma-glutamylcyclotransferase 2-1 (216 aa).

5 to 10 (VFGYGS) contacts substrate. Glu-87 acts as the Proton acceptor in catalysis.

It belongs to the gamma-glutamylcyclotransferase family. It depends on Mn(2+) as a cofactor. In terms of tissue distribution, expressed in the central vascular bundle of roots, leaf veins, hydathodes, cauline leaves, shoot apex, sepal veins, flower receptacles and developing seeds.

The protein resides in the cytoplasm. The catalysed reaction is an alpha-(gamma-L-glutamyl)-L-amino acid = 5-oxo-L-proline + an L-alpha-amino acid. Catalyzes the formation of 5-oxoproline from gamma-glutamyl dipeptides and plays a significant role in glutathione (GSH) homeostasis. Converts both GSH and gamma-glutamyl-L-alanine to 5-oxoproline in vitro. Plays a role in detoxification of heavy metals and metalloids by recycling glutamate and maintaining GSH homeostasis. This chain is Gamma-glutamylcyclotransferase 2-1, found in Arabidopsis thaliana (Mouse-ear cress).